A 278-amino-acid chain; its full sequence is Ribonuclease HII (278 aa).

The RNase H type-2 domain occupies 71–259 (WPVAGCDEAG…VAAAWDKHAP (189 aa)). The a divalent metal cation site is built by Asp-77, Glu-78, and Asp-168.

The protein belongs to the RNase HII family. It depends on Mn(2+) as a cofactor. Mg(2+) serves as cofactor.

It localises to the cytoplasm. It carries out the reaction Endonucleolytic cleavage to 5'-phosphomonoester.. Its function is as follows. Endonuclease that specifically degrades the RNA of RNA-DNA hybrids. This is Ribonuclease HII from Rhodopseudomonas palustris (strain BisA53).